The chain runs to 473 residues: MKTLYSLRRFYHVETLFNGTLALAGRDQETTGFAWWAGNARLINLSGKLLGAHVAHAGLIVFWAGAMNLFEVAHFVPEKPMYEQGLILLPHLATLGWGVGPGGEVIDTFPYFVSGVLHLISSAVLGFGGIYHALLGPETLEESFPFFGYVWKDRNKMTTILGIHLILLGVGAFLLVFKALYFGGVYDTWAPGGGDVRKITNLTLSPSVIFGYLLKSPFGGEGWIVSVDDLEDIIGGHVWLGSICIFGGIWHILTKPFAWARRALVWSGEAYLSYSLAALSVCGFIACCFVWFNNTAYPSEFYGPTGPEASQAQAFTFLVRDQRLGANVGSAQGPTGLGKYLMRSPTGEVIFGGETMRFWDLRAPWLEPLRGPNGLDLSRLKKDIQPWQERRSAEYMTHAPLGSLNSVGGVATEINAVNYVSPRSWLSTSHFVLGFFLFVGHLWHAGRARAAAAGFEKGIDRDFEPVLSMTPLN.

Positions 1 to 14 (MKTLYSLRRFYHVE) are excised as a propeptide. T15 bears the N-acetylthreonine mark. Residue T15 is modified to Phosphothreonine. 5 helical membrane passes run 69-93 (LFEV…PHLA), 134-155 (LLGP…KDRN), 178-200 (KALY…RKIT), 255-275 (KPFA…LSYS), and 291-312 (WFNN…ASQA). E367 provides a ligand contact to [CaMn4O5] cluster. Residues 447-471 (RARAAAAGFEKGIDRDFEPVLSMTP) form a helical membrane-spanning segment.

It belongs to the PsbB/PsbC family. PsbC subfamily. As to quaternary structure, PSII is composed of 1 copy each of membrane proteins PsbA, PsbB, PsbC, PsbD, PsbE, PsbF, PsbH, PsbI, PsbJ, PsbK, PsbL, PsbM, PsbT, PsbX, PsbY, PsbZ, Psb30/Ycf12, at least 3 peripheral proteins of the oxygen-evolving complex and a large number of cofactors. It forms dimeric complexes. Binds multiple chlorophylls and provides some of the ligands for the Ca-4Mn-5O cluster of the oxygen-evolving complex. It may also provide a ligand for a Cl- that is required for oxygen evolution. PSII binds additional chlorophylls, carotenoids and specific lipids. serves as cofactor.

The protein localises to the plastid. It localises to the chloroplast thylakoid membrane. One of the components of the core complex of photosystem II (PSII). It binds chlorophyll and helps catalyze the primary light-induced photochemical processes of PSII. PSII is a light-driven water:plastoquinone oxidoreductase, using light energy to abstract electrons from H(2)O, generating O(2) and a proton gradient subsequently used for ATP formation. In Draba nemorosa (Woodland whitlowgrass), this protein is Photosystem II CP43 reaction center protein.